Consider the following 338-residue polypeptide: Transferrin receptor subunit ESAG7 (338 aa).

The first 17 residues, 1–17 (MRFWFVLLALLGKEIYA), serve as a signal peptide directing secretion. N-linked (GlcNAc...) asparagine glycans are attached at residues asparagine 26 and asparagine 110. Disulfide bonds link cysteine 34–cysteine 161, cysteine 84–cysteine 311, cysteine 144–cysteine 215, and cysteine 230–cysteine 247. The N-linked (GlcNAc...) asparagine glycan is linked to asparagine 234.

In terms of assembly, heterodimer composed of ESAG6 and ESAG7. Post-translationally, N-glycosylated. Glycosylation is dispensable for heterodimer formation and host transferrin binding.

The protein resides in the cell membrane. It localises to the flagellar pocket. In terms of biological role, transferrin receptor subunit involved in receptor-mediated acquisition of iron from the environment by binding host TF/transferrin. This Trypanosoma brucei brucei protein is Transferrin receptor subunit ESAG7.